The sequence spans 448 residues: Phosphoglucosamine mutase (448 aa).

Residue serine 89 is the Phosphoserine intermediate of the active site. Residues serine 89, aspartate 232, aspartate 234, and aspartate 236 each contribute to the Mg(2+) site. Position 89 is a phosphoserine (serine 89).

The protein belongs to the phosphohexose mutase family. Forms large aggregates. Mg(2+) is required as a cofactor. In terms of processing, activated by phosphorylation.

The enzyme catalyses alpha-D-glucosamine 1-phosphate = D-glucosamine 6-phosphate. Catalyzes the conversion of glucosamine-6-phosphate to glucosamine-1-phosphate. This Methanocaldococcus jannaschii (strain ATCC 43067 / DSM 2661 / JAL-1 / JCM 10045 / NBRC 100440) (Methanococcus jannaschii) protein is Phosphoglucosamine mutase (glmM).